A 304-amino-acid chain; its full sequence is Serine protease 30 (304 aa).

A signal peptide spans 1-21; the sequence is MESWARCIFLLLLQILTGGRG. A propeptide spans 22 to 30 (activation peptide); that stretch reads DILHSGAGK. Residues 31–271 enclose the Peptidase S1 domain; sequence IVGGQDAPEG…YVDWIQRTLA (241 aa). A disulfide bridge links Cys57 with Cys73. The Charge relay system role is filled by His72. Asn79 carries an N-linked (GlcNAc...) asparagine glycan. Asp122 (charge relay system) is an active-site residue. Disulfide bonds link Cys155-Cys229, Cys185-Cys208, and Cys219-Cys247. Ser223 acts as the Charge relay system in catalysis. N-linked (GlcNAc...) asparagine glycans are attached at residues Asn232 and Asn273. Ser275 carries GPI-anchor amidated serine lipidation. The propeptide at 276 to 304 is removed in mature form; the sequence is DAYGCRSRASGAYPALLLVLLAFALPESL.

Belongs to the peptidase S1 family. Expressed predominantly in kidney, small intestine and stomach and moderately in thymus, lung, spleen, testis and skin. In the kidney, expressed mainly in collecting duct of renal medulla and cortex.

The protein localises to the cell membrane. Its activity is regulated as follows. Inhibited by aprotinin, leupeptin, benzamidine and soybean trypsin inhibitor. Partially inhibited by PMSF and DFP. Functionally, selectively cleaves synthetic peptide substrates of trypsin. Activates the epithelial sodium channel ENaC. The chain is Serine protease 30 (Prss30) from Rattus norvegicus (Rat).